Here is a 392-residue protein sequence, read N- to C-terminus: Probable tRNA sulfurtransferase (392 aa).

In terms of domain architecture, THUMP spans 59-166; that stretch reads SCYREALKRV…DEGLFIYTTE (108 aa). Residues 186 to 187, 211 to 212, R269, G290, and Q299 contribute to the ATP site; these read LL and YF.

Belongs to the ThiI family.

The protein localises to the cytoplasm. It catalyses the reaction [ThiI sulfur-carrier protein]-S-sulfanyl-L-cysteine + a uridine in tRNA + 2 reduced [2Fe-2S]-[ferredoxin] + ATP + H(+) = [ThiI sulfur-carrier protein]-L-cysteine + a 4-thiouridine in tRNA + 2 oxidized [2Fe-2S]-[ferredoxin] + AMP + diphosphate. It carries out the reaction [ThiS sulfur-carrier protein]-C-terminal Gly-Gly-AMP + S-sulfanyl-L-cysteinyl-[cysteine desulfurase] + AH2 = [ThiS sulfur-carrier protein]-C-terminal-Gly-aminoethanethioate + L-cysteinyl-[cysteine desulfurase] + A + AMP + 2 H(+). Its pathway is cofactor biosynthesis; thiamine diphosphate biosynthesis. Functionally, catalyzes the ATP-dependent transfer of a sulfur to tRNA to produce 4-thiouridine in position 8 of tRNAs, which functions as a near-UV photosensor. Also catalyzes the transfer of sulfur to the sulfur carrier protein ThiS, forming ThiS-thiocarboxylate. This is a step in the synthesis of thiazole, in the thiamine biosynthesis pathway. The sulfur is donated as persulfide by IscS. This is Probable tRNA sulfurtransferase from Coxiella burnetii (strain RSA 493 / Nine Mile phase I).